A 492-amino-acid polypeptide reads, in one-letter code: Probable cytochrome P450 516B1 (492 aa).

A helical membrane pass occupies residues 1 to 17 (MYLILSLIIFLAYVAFH). Residue C438 coordinates heme.

It belongs to the cytochrome P450 family. Heme serves as cofactor.

It is found in the membrane. The protein is Probable cytochrome P450 516B1 (cyp516B1) of Dictyostelium discoideum (Social amoeba).